The primary structure comprises 419 residues: eIF5-mimic protein 2 (419 aa).

Met1 is subject to N-acetylmethionine. Residues Met1–Arg15 are compositionally biased toward polar residues. Positions Met1 to Arg26 are disordered. Ser12 is subject to Phosphoserine. The W2 domain occupies Asn247–Glu414. Lys368 is covalently cross-linked (Glycyl lysine isopeptide (Lys-Gly) (interchain with G-Cter in SUMO2)). Phosphoserine is present on residues Ser411 and Ser413.

It belongs to the BZW family.

Its function is as follows. Translation initiation regulator which represses repeat-associated non-AUG (RAN) initiated translation probably by acting as a competitive inhibitor of eukaryotic translation initiation factor 5 (EIF5) function. Enhances histone H4 gene transcription but does not seem to bind DNA directly. This chain is eIF5-mimic protein 2 (BZW1), found in Pongo abelii (Sumatran orangutan).